Consider the following 55-residue polypeptide: Large ribosomal subunit protein bL33 (55 aa).

The protein belongs to the bacterial ribosomal protein bL33 family.

The sequence is that of Large ribosomal subunit protein bL33 from Rhodopseudomonas palustris (strain BisB18).